The chain runs to 178 residues: uncharacterized protein (178 aa).

Positions 1–23 (MNYSVIWAITILILGLVLTLAWA) are cleaved as a signal peptide.

This is an uncharacterized protein from Invertebrate iridescent virus 3 (IIV-3).